A 502-amino-acid chain; its full sequence is Glutamate--tRNA ligase (502 aa).

The 'HIGH' region signature appears at 9–19 (PSPTGFPHVGT). Residues 250–254 (KLSKR) carry the 'KMSKS' region motif. Lys253 lines the ATP pocket.

The protein belongs to the class-I aminoacyl-tRNA synthetase family. Glutamate--tRNA ligase type 1 subfamily. Monomer.

The protein localises to the cytoplasm. The enzyme catalyses tRNA(Glu) + L-glutamate + ATP = L-glutamyl-tRNA(Glu) + AMP + diphosphate. In terms of biological role, catalyzes the attachment of glutamate to tRNA(Glu) in a two-step reaction: glutamate is first activated by ATP to form Glu-AMP and then transferred to the acceptor end of tRNA(Glu). The polypeptide is Glutamate--tRNA ligase (Acinetobacter baumannii (strain AYE)).